The sequence spans 156 residues: Small ribosomal subunit protein uS7 (156 aa).

This sequence belongs to the universal ribosomal protein uS7 family. Part of the 30S ribosomal subunit. Contacts proteins S9 and S11.

Its function is as follows. One of the primary rRNA binding proteins, it binds directly to 16S rRNA where it nucleates assembly of the head domain of the 30S subunit. Is located at the subunit interface close to the decoding center, probably blocks exit of the E-site tRNA. This is Small ribosomal subunit protein uS7 from Kineococcus radiotolerans (strain ATCC BAA-149 / DSM 14245 / SRS30216).